The primary structure comprises 178 residues: 2-oxo-4-hydroxy-4-carboxy-5-ureidoimidazoline decarboxylase (178 aa).

The active-site Proton donor is histidine 67. Substrate is bound by residues proline 68, 84–88 (SQREQ), and 119–123 (FVLAA).

Belongs to the OHCU decarboxylase family.

The protein localises to the peroxisome. The catalysed reaction is 5-hydroxy-2-oxo-4-ureido-2,5-dihydro-1H-imidazole-5-carboxylate + H(+) = (S)-allantoin + CO2. It functions in the pathway purine metabolism; urate degradation; (S)-allantoin from urate: step 3/3. Functionally, catalyzes the stereoselective decarboxylation of 2-oxo-4-hydroxy-4-carboxy-5-ureidoimidazoline (OHCU) to (S)-allantoin. The polypeptide is 2-oxo-4-hydroxy-4-carboxy-5-ureidoimidazoline decarboxylase (Urad) (Mus musculus (Mouse)).